We begin with the raw amino-acid sequence, 604 residues long: NADP-dependent malic enzyme, mitochondrial (604 aa).

The segment at 28 to 50 is disordered; it reads SAPAQGCHSKSGPPRPVPLKKRG. The Proton donor role is filled by Y137. An NADP(+)-binding site is contributed by R190. K208 serves as the catalytic Proton acceptor. A divalent metal cation-binding residues include E280, D281, and D304. D304 contributes to the NADP(+) binding site. S371 carries the post-translational modification Phosphoserine. Residue N443 participates in NADP(+) binding.

It belongs to the malic enzymes family. It depends on Mg(2+) as a cofactor. Mn(2+) is required as a cofactor.

Its subcellular location is the mitochondrion matrix. It catalyses the reaction (S)-malate + NADP(+) = pyruvate + CO2 + NADPH. The catalysed reaction is oxaloacetate + H(+) = pyruvate + CO2. The sequence is that of NADP-dependent malic enzyme, mitochondrial (Me3) from Mus musculus (Mouse).